We begin with the raw amino-acid sequence, 496 residues long: MIEINNNHNNGNGKQFPSSQIMPDSKKKSIVKIGEYTLGEKIGRGAFGQVFKGLNGKTGEFVAIKQIDSNKIDESSLQSVKGEVEILHKLRHNNIVKVLGVVEVQAQLNFILEYVENGSLRDVIEKFGPLSEELCIIYLYQMLQGLAYLHSNKVIHRDIKASNILITKEGVIKLADFGVASQIDSESQLRFSVVGTPYWMAPESIEISGCSSASDIWSLGSTMIELLTGNPPYYTLQPMAAMFRIVSDQHPPFPTDISKEFLDYFQQSFKKDPTQRPTAQELLQHPIFFTLQKVPPTLSELQSTLKTLNGGRSRLRTSVNSIDWGSSSSTSGSSTPLSSSSSSSNIKSIVSDEDFNKLQTTIKQQAQTISNLSEEILILKKELKEKPKLEEQQFYKEYFMALAISVKVNQCYQDKTCEPKDMQQLYEMARSQEIPWYKLIEWIPSQLISNDNIPQLTPSSSRENISLSNSSSSIPNPNQNQNQNNKSKSKKFGFFS.

Positions M1–G13 are enriched in low complexity. Residues M1–S25 are disordered. The 253-residue stretch at Y36 to F288 folds into the Protein kinase domain. ATP-binding positions include I42 to V50 and K65. The active-site Proton acceptor is D158. The disordered stretch occupies residues D323–N345. Positions E353 to K386 form a coiled coil. A disordered region spans residues P454–S496. Low complexity predominate over residues P458–K486. Residues S487–S496 show a composition bias toward basic residues.

It belongs to the protein kinase superfamily. STE Ser/Thr protein kinase family. It depends on Mg(2+) as a cofactor.

The enzyme catalyses L-seryl-[protein] + ATP = O-phospho-L-seryl-[protein] + ADP + H(+). The catalysed reaction is L-threonyl-[protein] + ATP = O-phospho-L-threonyl-[protein] + ADP + H(+). This Dictyostelium discoideum (Social amoeba) protein is Probable serine/threonine-protein kinase DDB_G0284251.